Consider the following 331-residue polypeptide: Protoheme IX farnesyltransferase (331 aa).

8 helical membrane-spanning segments follow: residues 63 to 83, 109 to 129, 132 to 152, 160 to 180, 188 to 208, 215 to 235, 241 to 261, and 294 to 314; these read LACT…LNCL, SVFI…VSGV, LAAG…TAFL, IVFG…AAAG, WLFS…AILL, VGIP…AISV, VFLS…YGIL, and ILYM…VSIV.

It belongs to the UbiA prenyltransferase family. Protoheme IX farnesyltransferase subfamily.

It localises to the cell inner membrane. It carries out the reaction heme b + (2E,6E)-farnesyl diphosphate + H2O = Fe(II)-heme o + diphosphate. It participates in porphyrin-containing compound metabolism; heme O biosynthesis; heme O from protoheme: step 1/1. Its function is as follows. Converts heme B (protoheme IX) to heme O by substitution of the vinyl group on carbon 2 of heme B porphyrin ring with a hydroxyethyl farnesyl side group. In Prochlorococcus marinus (strain NATL1A), this protein is Protoheme IX farnesyltransferase.